A 172-amino-acid chain; its full sequence is Putative phosphoesterase BCE_1348 (172 aa).

Residue histidine 34 is the Proton donor of the active site. Short sequence motifs (HXTX) lie at residues 34 to 37 (HITL) and 115 to 118 (HLTI). Residue histidine 115 is the Proton acceptor of the active site.

It belongs to the 2H phosphoesterase superfamily. YjcG family.

The polypeptide is Putative phosphoesterase BCE_1348 (Bacillus cereus (strain ATCC 10987 / NRS 248)).